Reading from the N-terminus, the 166-residue chain is Ureidoglycolate lyase (166 aa).

Belongs to the ureidoglycolate lyase family. As to quaternary structure, homodimer. The cofactor is Ni(2+).

It carries out the reaction (S)-ureidoglycolate = urea + glyoxylate. The protein operates within nitrogen metabolism; (S)-allantoin degradation. Functionally, catalyzes the catabolism of the allantoin degradation intermediate (S)-ureidoglycolate, generating urea and glyoxylate. Involved in the utilization of allantoin as nitrogen source. The protein is Ureidoglycolate lyase of Rhizobium etli (strain CIAT 652).